We begin with the raw amino-acid sequence, 578 residues long: Galectin-3-binding protein (578 aa).

Residues 1–18 (MAFLWLFSLWLLVPGTQG) form the signal peptide. The SRCR domain maps to 24–124 (MRLVNGASAN…HEKDAGVVCS (101 aa)). Disulfide bonds link cysteine 49–cysteine 113, cysteine 62–cysteine 123, and cysteine 93–cysteine 103. 2 N-linked (GlcNAc...) asparagine glycosylation sites follow: asparagine 69 and asparagine 102. The 69-residue stretch at 153-221 (CDLFIQVTGQ…FYSRRIEVTM (69 aa)) folds into the BTB domain. Positions 260 to 360 (PLELYAYAQA…VLPQELFELQ (101 aa)) constitute a BACK domain. Asparagine 362 and asparagine 398 each carry an N-linked (GlcNAc...) asparagine glycan.

Homodimers and homomultimers. The multimers form ring-like structures with a diameter of 30-40 nm. Binds LGALS1 and LGALS3. Binds ITGB1, COL4A1, COL5A1, COL6A1, FN1 and NID. The unglycosylated form interacts with PDE4DIP; this interaction, which is PDE4DIP isoform-specific, may connect a pericentrosomal complex to the gamma-tubulin ring complex (gamma-TuRC) to promote microtubule assembly and acetylation.

It is found in the secreted. It localises to the extracellular space. The protein resides in the extracellular matrix. Promotes integrin-mediated cell adhesion. May stimulate host defense against viruses and tumor cells. The sequence is that of Galectin-3-binding protein (LGALS3BP) from Mesocricetus auratus (Golden hamster).